Here is a 146-residue protein sequence, read N- to C-terminus: Hut operon positive regulatory protein (146 aa).

It belongs to the HutP family. Homohexamer.

In terms of biological role, antiterminator that binds to cis-acting regulatory sequences on the mRNA in the presence of histidine, thereby suppressing transcription termination and activating the hut operon for histidine utilization. The chain is Hut operon positive regulatory protein from Bacillus anthracis (strain CDC 684 / NRRL 3495).